Consider the following 64-residue polypeptide: Copper-specific metallothionein-2 (64 aa).

Residues cysteine 3, cysteine 5, cysteine 9, cysteine 11, cysteine 16, cysteine 18, cysteine 22, cysteine 24, cysteine 27, cysteine 33, cysteine 40, cysteine 44, cysteine 50, cysteine 52, cysteine 56, and cysteine 58 each contribute to the Cu(+) site.

The protein belongs to the metallothionein superfamily. Type 2 family.

Its function is as follows. The metallothioneins are involved in the cellular sequestration of toxic metal ions and regulation of essential trace elements. This isoform binds exclusively copper. The polypeptide is Copper-specific metallothionein-2 (Callinectes sapidus (Blue crab)).